The primary structure comprises 124 residues: Ribonuclease pancreatic (124 aa).

K7 and R10 together coordinate substrate. H12 serves as the catalytic Proton acceptor. Disulfide bonds link C26/C84, C40/C95, C58/C110, and C65/C72. An N-linked (GlcNAc...) asparagine glycan is attached at N34. Substrate contacts are provided by residues 41–45 (KPVNT), K66, and R85. H119 (proton donor) is an active-site residue.

Belongs to the pancreatic ribonuclease family. In terms of assembly, monomer. Interacts with and forms tight 1:1 complexes with RNH1. Dimerization of two such complexes may occur. Interaction with RNH1 inhibits this protein. Pancreas.

It localises to the secreted. The catalysed reaction is an [RNA] containing cytidine + H2O = an [RNA]-3'-cytidine-3'-phosphate + a 5'-hydroxy-ribonucleotide-3'-[RNA].. It carries out the reaction an [RNA] containing uridine + H2O = an [RNA]-3'-uridine-3'-phosphate + a 5'-hydroxy-ribonucleotide-3'-[RNA].. Its function is as follows. Endonuclease that catalyzes the cleavage of RNA on the 3' side of pyrimidine nucleotides. Acts on single-stranded and double-stranded RNA. This chain is Ribonuclease pancreatic (RNASE1), found in Mesocricetus auratus (Golden hamster).